The chain runs to 248 residues: MKKKLIVGNWKMNGGLAANAVLLKALKEGLPEGGNAGVAVAVPAVYLAQAQAELEGSAIGVAAQDVSQHESGAYTGELSAAMLRDFGVRYTLVGHSERRQYHGETDAVVALKAQAALAKGVTPIVCVGETLAEREAGQTEEVVKRQLAAVIHQVGQCINELVVAYEPVWAIGTGRTATPEQAQQVHAVLRAQLAAASQQADRIALLYGGSMNASNAAQLLAQADIDGGLVGGASLKAADFLTIIAAAQ.

Substrate is bound at residue Asn-9–Lys-11. The active-site Electrophile is His-95. The active-site Proton acceptor is the Glu-166. Residues Gly-172, Ser-210, and Gly-231–Gly-232 each bind substrate.

It belongs to the triosephosphate isomerase family. As to quaternary structure, homodimer.

Its subcellular location is the cytoplasm. It catalyses the reaction D-glyceraldehyde 3-phosphate = dihydroxyacetone phosphate. It functions in the pathway carbohydrate biosynthesis; gluconeogenesis. Its pathway is carbohydrate degradation; glycolysis; D-glyceraldehyde 3-phosphate from glycerone phosphate: step 1/1. Involved in the gluconeogenesis. Catalyzes stereospecifically the conversion of dihydroxyacetone phosphate (DHAP) to D-glyceraldehyde-3-phosphate (G3P). The chain is Triosephosphate isomerase from Delftia acidovorans (strain DSM 14801 / SPH-1).